A 131-amino-acid chain; its full sequence is UPF0102 protein YraN (131 aa).

The protein belongs to the UPF0102 family.

The protein is UPF0102 protein YraN of Salmonella typhimurium (strain LT2 / SGSC1412 / ATCC 700720).